Here is a 335-residue protein sequence, read N- to C-terminus: Casein kinase I (335 aa).

One can recognise a Protein kinase domain in the interval 9–278; the sequence is YRLGRKIGSG…LRRLFKDLFF (270 aa). Residues 15–23 and K38 each bind ATP; that span reads IGSGSFGDI. D128 functions as the Proton acceptor in the catalytic mechanism. The tract at residues 304 to 335 is disordered; that stretch reads RSMVNQGAESGNQWRRDASGRDPLGRLPQLEP. Positions 305–316 are enriched in polar residues; the sequence is SMVNQGAESGNQ. The segment covering 317 to 327 has biased composition (basic and acidic residues); it reads WRRDASGRDPL.

The protein belongs to the protein kinase superfamily. CK1 Ser/Thr protein kinase family. Casein kinase I subfamily.

The enzyme catalyses L-seryl-[protein] + ATP = O-phospho-L-seryl-[protein] + ADP + H(+). It catalyses the reaction L-threonyl-[protein] + ATP = O-phospho-L-threonyl-[protein] + ADP + H(+). Functionally, casein kinases are operationally defined by their preferential utilization of acidic proteins such as caseins as substrates. It can phosphorylate a large number of proteins. The chain is Casein kinase I from Eimeria tenella (Coccidian parasite).